A 455-amino-acid chain; its full sequence is Homogentisate 1,2-dioxygenase (455 aa).

The active-site Proton acceptor is the His308. Fe cation is bound by residues His351 and Glu357. Homogentisate is bound by residues Tyr366 and His387. His387 serves as a coordination point for Fe cation.

Belongs to the homogentisate dioxygenase family. Hexamer; dimer of trimers. Requires Fe cation as cofactor.

It catalyses the reaction homogentisate + O2 = 4-maleylacetoacetate + H(+). It functions in the pathway amino-acid degradation; L-phenylalanine degradation; acetoacetate and fumarate from L-phenylalanine: step 4/6. Its function is as follows. Involved in the catabolism of homogentisate (2,5-dihydroxyphenylacetate or 2,5-OH-PhAc), a central intermediate in the degradation of phenylalanine and tyrosine. Catalyzes the oxidative ring cleavage of the aromatic ring of homogentisate to yield maleylacetoacetate. This Xanthomonas campestris pv. campestris (strain 8004) protein is Homogentisate 1,2-dioxygenase.